Consider the following 228-residue polypeptide: 7-cyano-7-deazaguanine synthase (228 aa).

7–17 (LSGGLDSSTAL) provides a ligand contact to ATP. 4 residues coordinate Zn(2+): cysteine 190, cysteine 202, cysteine 205, and cysteine 208.

This sequence belongs to the QueC family. Zn(2+) is required as a cofactor.

The catalysed reaction is 7-carboxy-7-deazaguanine + NH4(+) + ATP = 7-cyano-7-deazaguanine + ADP + phosphate + H2O + H(+). Its pathway is purine metabolism; 7-cyano-7-deazaguanine biosynthesis. In terms of biological role, catalyzes the ATP-dependent conversion of 7-carboxy-7-deazaguanine (CDG) to 7-cyano-7-deazaguanine (preQ(0)). This is 7-cyano-7-deazaguanine synthase from Acaryochloris marina (strain MBIC 11017).